Reading from the N-terminus, the 147-residue chain is MKLHELKPAQGSTKAPKRLGRGIGSGTGKTSGKGHKGQKARAGGGVRPGFEGGQQPLSRRMPKRGFTNIFKKEYVVLNVRDLEERFENGAVVGYESLFEVGLIKTIKDGVKILGTGELTKALTVQVDKVSQTAAEKIVAAGGKVEVE.

Residues 1–62 are disordered; the sequence is MKLHELKPAQ…GQQPLSRRMP (62 aa). Composition is skewed to gly residues over residues 21–31 and 42–52; these read RGIGSGTGKTS and AGGGVRPGFEG.

It belongs to the universal ribosomal protein uL15 family. Part of the 50S ribosomal subunit.

Its function is as follows. Binds to the 23S rRNA. The sequence is that of Large ribosomal subunit protein uL15 from Desulfitobacterium hafniense (strain DSM 10664 / DCB-2).